Here is a 329-residue protein sequence, read N- to C-terminus: Ketol-acid reductoisomerase (NADP(+)) (329 aa).

The region spanning 1 to 181 is the KARI N-terminal Rossmann domain; the sequence is MKIYYDQDAD…GGTRGGVLTT (181 aa). NADP(+)-binding positions include 24-27, Arg-47, and 82-85; these read YGSQ and DQHQ. The active site involves His-107. Gly-133 is an NADP(+) binding site. The region spanning 182–327 is the KARI C-terminal knotted domain; sequence TFKEETETDL…AKLRGMMSWL (146 aa). Residues Asp-190, Glu-194, Glu-226, and Glu-230 each contribute to the Mg(2+) site. A substrate-binding site is contributed by Ser-251.

It belongs to the ketol-acid reductoisomerase family. Mg(2+) serves as cofactor.

It catalyses the reaction (2R)-2,3-dihydroxy-3-methylbutanoate + NADP(+) = (2S)-2-acetolactate + NADPH + H(+). It carries out the reaction (2R,3R)-2,3-dihydroxy-3-methylpentanoate + NADP(+) = (S)-2-ethyl-2-hydroxy-3-oxobutanoate + NADPH + H(+). It functions in the pathway amino-acid biosynthesis; L-isoleucine biosynthesis; L-isoleucine from 2-oxobutanoate: step 2/4. The protein operates within amino-acid biosynthesis; L-valine biosynthesis; L-valine from pyruvate: step 2/4. In terms of biological role, involved in the biosynthesis of branched-chain amino acids (BCAA). Catalyzes an alkyl-migration followed by a ketol-acid reduction of (S)-2-acetolactate (S2AL) to yield (R)-2,3-dihydroxy-isovalerate. In the isomerase reaction, S2AL is rearranged via a Mg-dependent methyl migration to produce 3-hydroxy-3-methyl-2-ketobutyrate (HMKB). In the reductase reaction, this 2-ketoacid undergoes a metal-dependent reduction by NADPH to yield (R)-2,3-dihydroxy-isovalerate. The chain is Ketol-acid reductoisomerase (NADP(+)) from Solidesulfovibrio magneticus (strain ATCC 700980 / DSM 13731 / RS-1) (Desulfovibrio magneticus).